Consider the following 237-residue polypeptide: Demethylmenaquinone methyltransferase (237 aa).

Residues threonine 58, aspartate 79, and 106 to 107 each bind S-adenosyl-L-methionine; that span reads NA.

Belongs to the class I-like SAM-binding methyltransferase superfamily. MenG/UbiE family.

The enzyme catalyses a 2-demethylmenaquinol + S-adenosyl-L-methionine = a menaquinol + S-adenosyl-L-homocysteine + H(+). Its pathway is quinol/quinone metabolism; menaquinone biosynthesis; menaquinol from 1,4-dihydroxy-2-naphthoate: step 2/2. In terms of biological role, methyltransferase required for the conversion of demethylmenaquinol (DMKH2) to menaquinol (MKH2). The protein is Demethylmenaquinone methyltransferase of Bacillus mycoides (strain KBAB4) (Bacillus weihenstephanensis).